Reading from the N-terminus, the 260-residue chain is Thiazole synthase (260 aa).

The Schiff-base intermediate with DXP role is filled by Lys102. 1-deoxy-D-xylulose 5-phosphate is bound by residues Gly163, 189–190, and 211–212; these read AG and NT.

This sequence belongs to the ThiG family. As to quaternary structure, homotetramer. Forms heterodimers with either ThiH or ThiS.

The protein resides in the cytoplasm. The catalysed reaction is [ThiS sulfur-carrier protein]-C-terminal-Gly-aminoethanethioate + 2-iminoacetate + 1-deoxy-D-xylulose 5-phosphate = [ThiS sulfur-carrier protein]-C-terminal Gly-Gly + 2-[(2R,5Z)-2-carboxy-4-methylthiazol-5(2H)-ylidene]ethyl phosphate + 2 H2O + H(+). The protein operates within cofactor biosynthesis; thiamine diphosphate biosynthesis. Functionally, catalyzes the rearrangement of 1-deoxy-D-xylulose 5-phosphate (DXP) to produce the thiazole phosphate moiety of thiamine. Sulfur is provided by the thiocarboxylate moiety of the carrier protein ThiS. In vitro, sulfur can be provided by H(2)S. The chain is Thiazole synthase from Geotalea uraniireducens (strain Rf4) (Geobacter uraniireducens).